Consider the following 356-residue polypeptide: MAEFFAAPFWTDFLWPLIVMVAQSVLLLVVLLIAIAYILLADRKIWAAVQIRRGPNVVGPWGLLQSFADLLKFVLKEPIIPSGSNKGVFLLAPLVTCVLALAAWAVIPVNLNWVISDINVGILYIFAISSLSIYGIIMAGWSSNSKYPFLAALRSAAQMVSYEVSIGFVFITVLLCAGSLNLSAIVEAQHVRGLGSLIGLPWLTFLNWYWLPLLPMFVVFYVSALAETNRPPFDLVEAESELVAGFMVEYGSTPYLLFMLGEYVAITTMCAMGAILFMGGWLPPIDLPPFNWVPGVIWFSLKLFFMFFLFAMAKAIVPRYRYDQLMRLGWKVFLPLSLAMVVIVAGVLQFADIAPK.

The next 8 membrane-spanning stretches (helical) occupy residues 18–38 (IVMV…IAYI), 87–107 (GVFL…WAVI), 120–140 (VGIL…IMAG), 166–186 (IGFV…SAIV), 202–222 (WLTF…VFYV), 265–285 (AITT…LPPI), 292–312 (WVPG…LFAM), and 328–348 (LGWK…AGVL).

It belongs to the complex I subunit 1 family. In terms of assembly, NDH-1 is composed of 14 different subunits. Subunits NuoA, H, J, K, L, M, N constitute the membrane sector of the complex.

Its subcellular location is the cell inner membrane. The enzyme catalyses a quinone + NADH + 5 H(+)(in) = a quinol + NAD(+) + 4 H(+)(out). In terms of biological role, NDH-1 shuttles electrons from NADH, via FMN and iron-sulfur (Fe-S) centers, to quinones in the respiratory chain. The immediate electron acceptor for the enzyme in this species is believed to be ubiquinone. Couples the redox reaction to proton translocation (for every two electrons transferred, four hydrogen ions are translocated across the cytoplasmic membrane), and thus conserves the redox energy in a proton gradient. This subunit may bind ubiquinone. The polypeptide is NADH-quinone oxidoreductase subunit H (Nitrobacter hamburgensis (strain DSM 10229 / NCIMB 13809 / X14)).